Here is a 41-residue protein sequence, read N- to C-terminus: Alpha-conotoxin CIB (41 aa).

The propeptide occupies 1 to 21 (SDGRNEAANDEASDVIELALK). 2 disulfides stabilise this stretch: Cys23-Cys29 and Cys24-Cys37. Positions 25–27 (SNP) are ser-Xaa-Pro motif, crucial for potent interaction with nAChR. Position 37 is a cysteine amide (Cys37).

Belongs to the conotoxin A superfamily. In terms of tissue distribution, expressed by the venom duct.

The protein resides in the secreted. Functionally, alpha-conotoxins act on postsynaptic membranes, they bind to the nicotinic acetylcholine receptors (nAChR) and thus inhibit them. This toxin blocks rat neuronal nAChR alpha-3-beta-2/CHRNA3-CHRNB2 (IC(50)=128.9 nM) and alpha-7/CHRNA7 (IC(50)=1511 nM). In vivo, intramuscular injection into zebrafish does not produce any effect on the locomotion of zebrafish. This chain is Alpha-conotoxin CIB, found in Conus catus (Cat cone).